The sequence spans 329 residues: GMP reductase (329 aa).

The Thioimidate intermediate role is filled by cysteine 178. NADP(+) is bound at residue 207 to 230 (VIADGGIRTHGDIAKSIRMGATMV).

Belongs to the IMPDH/GMPR family. GuaC type 2 subfamily.

It catalyses the reaction IMP + NH4(+) + NADP(+) = GMP + NADPH + 2 H(+). Functionally, catalyzes the irreversible NADPH-dependent deamination of GMP to IMP. It functions in the conversion of nucleobase, nucleoside and nucleotide derivatives of G to A nucleotides, and in maintaining the intracellular balance of A and G nucleotides. This Lactococcus lactis subsp. cremoris (strain SK11) protein is GMP reductase.